Consider the following 335-residue polypeptide: Olfactory receptor 10R2 (335 aa).

The Extracellular portion of the chain corresponds to 1 to 45 (MPQILIFTYLNMFYFFPPLQILAENLTMVTEFLLLGFSSLGEIQL). The N-linked (GlcNAc...) asparagine glycan is linked to asparagine 25. Residues 46 to 66 (ALFVVFLFLYLVILSGNVTII) traverse the membrane as a helical segment. Residues 67–74 (SVIHLDKS) lie on the Cytoplasmic side of the membrane. Residues 75–95 (LHTPMYFFLGILSTSETFYTF) traverse the membrane as a helical segment. At 96-119 (VILPKMLINLLSVARTISFNCCAL) the chain is on the extracellular side. Cysteine 117 and cysteine 209 are disulfide-bonded. A helical membrane pass occupies residues 120 to 140 (QMFFFLGFAITNCLLLGVMGY). The Cytoplasmic portion of the chain corresponds to 141-159 (DRYAAICHPLHYPTLMSWQ). A helical transmembrane segment spans residues 160–180 (VCGKLAAACAIGGFLASLTVV). The Extracellular segment spans residues 181–217 (NLVFSLPFCSANKVNHYFCDISAVILLACTNTDVNEF). The chain crosses the membrane as a helical span at residues 218 to 237 (VIFICGVLVLVVPFLFICVS). Residues 238–257 (YLCILRTILKIPSAEGRRKA) lie on the Cytoplasmic side of the membrane. Residues 258–278 (FSTCASHLSVVIVHYGCASFI) form a helical membrane-spanning segment. Residues 279 to 291 (YLRPTANYVSNKD) are Extracellular-facing. A helical membrane pass occupies residues 292 to 312 (RLVTVTYTIVTPLLNPMVYSL). Residues 313 to 335 (RNKDVQLAIRKVLGKKGSLKLYN) lie on the Cytoplasmic side of the membrane.

It belongs to the G-protein coupled receptor 1 family.

Its subcellular location is the cell membrane. Its function is as follows. Odorant receptor. In Homo sapiens (Human), this protein is Olfactory receptor 10R2 (OR10R2).